A 434-amino-acid polypeptide reads, in one-letter code: Chaperone SurA (434 aa).

Positions 1-22 are cleaved as a signal peptide; it reads MKHSKKIIFALLALAMSNTSMA. 2 consecutive PpiC domains span residues 173-274 and 283-383; these read DVEF…KVVD and VEEV…QLES.

The protein localises to the periplasm. The enzyme catalyses [protein]-peptidylproline (omega=180) = [protein]-peptidylproline (omega=0). In terms of biological role, chaperone involved in the correct folding and assembly of outer membrane proteins. Recognizes specific patterns of aromatic residues and the orientation of their side chains, which are found more frequently in integral outer membrane proteins. May act in both early periplasmic and late outer membrane-associated steps of protein maturation. The chain is Chaperone SurA from Shewanella frigidimarina (strain NCIMB 400).